The sequence spans 55 residues: uncharacterized protein (55 aa).

This is an uncharacterized protein from Salmonella typhimurium (strain LT2 / SGSC1412 / ATCC 700720).